A 545-amino-acid polypeptide reads, in one-letter code: CTP synthase (545 aa).

Residues 1 to 266 (MATNYIFVTG…DSFVCDRFRL (266 aa)) are amidoligase domain. CTP is bound at residue S14. UTP is bound at residue S14. ATP contacts are provided by residues 15-20 (SLGKGI) and D72. Residues D72 and E140 each coordinate Mg(2+). Residues 147-149 (DIE), 187-192 (KTKPTQ), and K223 each bind CTP. Residues 187-192 (KTKPTQ) and K223 contribute to the UTP site. 239–241 (KDV) lines the ATP pocket. Residues 291–542 (TIGMVGKYVE…VAAAKAYQDS (252 aa)) form the Glutamine amidotransferase type-1 domain. G352 lines the L-glutamine pocket. Residue C379 is the Nucleophile; for glutamine hydrolysis of the active site. L-glutamine-binding positions include 380-383 (LGMQ), E403, and R470. Residues H515 and E517 contribute to the active site.

This sequence belongs to the CTP synthase family. In terms of assembly, homotetramer.

The enzyme catalyses UTP + L-glutamine + ATP + H2O = CTP + L-glutamate + ADP + phosphate + 2 H(+). It catalyses the reaction L-glutamine + H2O = L-glutamate + NH4(+). The catalysed reaction is UTP + NH4(+) + ATP = CTP + ADP + phosphate + 2 H(+). It functions in the pathway pyrimidine metabolism; CTP biosynthesis via de novo pathway; CTP from UDP: step 2/2. Its activity is regulated as follows. Allosterically activated by GTP, when glutamine is the substrate; GTP has no effect on the reaction when ammonia is the substrate. The allosteric effector GTP functions by stabilizing the protein conformation that binds the tetrahedral intermediate(s) formed during glutamine hydrolysis. Inhibited by the product CTP, via allosteric rather than competitive inhibition. Its function is as follows. Catalyzes the ATP-dependent amination of UTP to CTP with either L-glutamine or ammonia as the source of nitrogen. Regulates intracellular CTP levels through interactions with the four ribonucleotide triphosphates. The polypeptide is CTP synthase (Haemophilus ducreyi (strain 35000HP / ATCC 700724)).